A 131-amino-acid chain; its full sequence is DNA-directed RNA polymerase subunit Rpo8 (131 aa).

It belongs to the archaeal Rpo8 RNA polymerase subunit family. Part of the 13-subunit RNA polymerase complex. Interacts with Rpo1N on the periphery of the clamp head.

The protein localises to the cytoplasm. It catalyses the reaction RNA(n) + a ribonucleoside 5'-triphosphate = RNA(n+1) + diphosphate. DNA-dependent RNA polymerase (RNAP) catalyzes the transcription of DNA into RNA using the four ribonucleoside triphosphates as substrates. In Saccharolobus shibatae (strain ATCC 51178 / DSM 5389 / JCM 8931 / NBRC 15437 / B12) (Sulfolobus shibatae), this protein is DNA-directed RNA polymerase subunit Rpo8.